A 323-amino-acid chain; its full sequence is Beta-ketoacyl-[acyl-carrier-protein] synthase III (323 aa).

Active-site residues include Cys-114 and His-250. An ACP-binding region spans residues 251–255; that stretch reads QANKR. Asn-280 is a catalytic residue.

Belongs to the thiolase-like superfamily. FabH family. Homodimer.

Its subcellular location is the cytoplasm. The enzyme catalyses malonyl-[ACP] + acetyl-CoA + H(+) = 3-oxobutanoyl-[ACP] + CO2 + CoA. It functions in the pathway lipid metabolism; fatty acid biosynthesis. Functionally, catalyzes the condensation reaction of fatty acid synthesis by the addition to an acyl acceptor of two carbons from malonyl-ACP. Catalyzes the first condensation reaction which initiates fatty acid synthesis and may therefore play a role in governing the total rate of fatty acid production. Possesses both acetoacetyl-ACP synthase and acetyl transacylase activities. Its substrate specificity determines the biosynthesis of branched-chain and/or straight-chain of fatty acids. This Hyphomonas neptunium (strain ATCC 15444) protein is Beta-ketoacyl-[acyl-carrier-protein] synthase III.